Here is a 301-residue protein sequence, read N- to C-terminus: Pantothenate synthetase (301 aa).

Methionine 30–histidine 37 contacts ATP. The active-site Proton donor is histidine 37. Glutamine 61 contributes to the (R)-pantoate binding site. Glutamine 61 is a binding site for beta-alanine. Glycine 149–aspartate 152 contacts ATP. A (R)-pantoate-binding site is contributed by glutamine 155. ATP contacts are provided by residues valine 178 and methionine 186 to arginine 189.

The protein belongs to the pantothenate synthetase family. Homodimer.

It is found in the cytoplasm. It catalyses the reaction (R)-pantoate + beta-alanine + ATP = (R)-pantothenate + AMP + diphosphate + H(+). It functions in the pathway cofactor biosynthesis; (R)-pantothenate biosynthesis; (R)-pantothenate from (R)-pantoate and beta-alanine: step 1/1. Catalyzes the condensation of pantoate with beta-alanine in an ATP-dependent reaction via a pantoyl-adenylate intermediate. This chain is Pantothenate synthetase, found in Vibrio parahaemolyticus serotype O3:K6 (strain RIMD 2210633).